The sequence spans 31 residues: Photosystem I reaction center subunit XII (31 aa).

Residues glutamine 7 to glycine 26 form a helical membrane-spanning segment.

This sequence belongs to the PsaM family.

It is found in the plastid. The protein resides in the chloroplast thylakoid membrane. In Euglena viridis (Cercaria viridis), this protein is Photosystem I reaction center subunit XII.